The primary structure comprises 366 residues: Chorismate synthase (366 aa).

The NADP(+) site is built by Arg48 and Arg54. Residues 125-127, 238-239, Gly278, 293-297, and Arg319 each bind FMN; these read RSS, NA, and KPTSS.

The protein belongs to the chorismate synthase family. Homotetramer. It depends on FMNH2 as a cofactor.

The catalysed reaction is 5-O-(1-carboxyvinyl)-3-phosphoshikimate = chorismate + phosphate. It functions in the pathway metabolic intermediate biosynthesis; chorismate biosynthesis; chorismate from D-erythrose 4-phosphate and phosphoenolpyruvate: step 7/7. In terms of biological role, catalyzes the anti-1,4-elimination of the C-3 phosphate and the C-6 proR hydrogen from 5-enolpyruvylshikimate-3-phosphate (EPSP) to yield chorismate, which is the branch point compound that serves as the starting substrate for the three terminal pathways of aromatic amino acid biosynthesis. This reaction introduces a second double bond into the aromatic ring system. The protein is Chorismate synthase of Herminiimonas arsenicoxydans.